The primary structure comprises 206 residues: RNA pyrophosphohydrolase (206 aa).

Positions 6–150 constitute a Nudix hydrolase domain; the sequence is GYRPNVGIVI…KRDVYRKVMK (145 aa). A Nudix box motif is present at residues 38-59; the sequence is GGINEGENIETAMYRELYEEVG. Positions 162-191 are enriched in basic and acidic residues; it reads KPETVEKPRVERTEKRDFQKRDNQKREFRK. The segment at 162–206 is disordered; that stretch reads KPETVEKPRVERTEKRDFQKRDNQKREFRKSARMWNNSHQKGKAQ.

This sequence belongs to the Nudix hydrolase family. RppH subfamily. Requires a divalent metal cation as cofactor.

Functionally, accelerates the degradation of transcripts by removing pyrophosphate from the 5'-end of triphosphorylated RNA, leading to a more labile monophosphorylated state that can stimulate subsequent ribonuclease cleavage. The protein is RNA pyrophosphohydrolase of Actinobacillus pleuropneumoniae serotype 5b (strain L20).